We begin with the raw amino-acid sequence, 371 residues long: Putative agmatine deiminase (371 aa).

C361 serves as the catalytic Amidino-cysteine intermediate.

This sequence belongs to the agmatine deiminase family.

The catalysed reaction is agmatine + H2O = N-carbamoylputrescine + NH4(+). The polypeptide is Putative agmatine deiminase (Selenomonas ruminantium).